Consider the following 540-residue polypeptide: Probable ATP-dependent RNA helicase DDX28 (540 aa).

Positions 3 to 18 (LTRPVRLFSLVTRLLL) match the Mitochondrial targeting signal motif. The Q motif motif lies at 126–156 (GSFADLGLEPRVLHALQEAAPEVVQPTTVQS). The Helicase ATP-binding domain occupies 159 to 351 (IPSLLRGRHV…NKVASPDAVT (193 aa)). ATP is bound at residue 172 to 179 (AETGSGKT). The Nuclear export signal motif lies at 180–191 (LSYLLPLLQRLL). The short motif at 286–289 (DEAD) is the DEAD element. A Helicase C-terminal domain is found at 377–536 (KVAELVHILK…GLASSVKEPL (160 aa)). The Nuclear localization signal signature appears at 520–523 (RRRR).

Belongs to the DEAD box helicase family. As to quaternary structure, monomer. Found in a complex with GRSF1, DHX30, FASTKD2 and FASTKD5. Associates with the 16S mitochondrial rRNA (16S mt-rRNA) and with the mitochondrial ribosome large subunit (39S). As to expression, expressed in all tissues tested, including brain, placenta, lung, liver, skeletal muscle, kidney, pancreas, leukocytes, colon, small intestine, ovary and prostate.

It localises to the nucleus. The protein localises to the mitochondrion. It is found in the mitochondrion matrix. The protein resides in the mitochondrion nucleoid. It catalyses the reaction ATP + H2O = ADP + phosphate + H(+). Functionally, plays an essential role in facilitating the proper assembly of the mitochondrial large ribosomal subunit and its helicase activity is essential for this function. May be involved in RNA processing or transport. Has RNA and Mg(2+)-dependent ATPase activity. The chain is Probable ATP-dependent RNA helicase DDX28 (DDX28) from Homo sapiens (Human).